Here is a 210-residue protein sequence, read N- to C-terminus: Uracil phosphoribosyltransferase (210 aa).

5-phospho-alpha-D-ribose 1-diphosphate-binding positions include Arg78, Arg103, and 130–138 (DPMLATGGT). Residues Ile193 and 198–200 (GDA) contribute to the uracil site. Asp199 provides a ligand contact to 5-phospho-alpha-D-ribose 1-diphosphate.

This sequence belongs to the UPRTase family. The cofactor is Mg(2+).

It catalyses the reaction UMP + diphosphate = 5-phospho-alpha-D-ribose 1-diphosphate + uracil. The protein operates within pyrimidine metabolism; UMP biosynthesis via salvage pathway; UMP from uracil: step 1/1. Allosterically activated by GTP. Functionally, catalyzes the conversion of uracil and 5-phospho-alpha-D-ribose 1-diphosphate (PRPP) to UMP and diphosphate. This chain is Uracil phosphoribosyltransferase, found in Xanthomonas campestris pv. campestris (strain 8004).